Here is a 274-residue protein sequence, read N- to C-terminus: tRNA pseudouridine synthase A (274 aa).

Catalysis depends on aspartate 52, which acts as the Nucleophile. Tyrosine 110 is a binding site for substrate.

It belongs to the tRNA pseudouridine synthase TruA family. Homodimer.

It carries out the reaction uridine(38/39/40) in tRNA = pseudouridine(38/39/40) in tRNA. Its function is as follows. Formation of pseudouridine at positions 38, 39 and 40 in the anticodon stem and loop of transfer RNAs. This is tRNA pseudouridine synthase A from Ralstonia nicotianae (strain ATCC BAA-1114 / GMI1000) (Ralstonia solanacearum).